We begin with the raw amino-acid sequence, 216 residues long: MNKVNFRILGLQKYQDIYYIMQKFITCLKKNNINEIWLLEHYPVFTQGNSDNFNKKYIFNIPVVKTDRGGHMTFHGPGQKIIYFLLNIKNLNIKISKLIFYLENIIISTLSYFKINSYSIKNSPGVYVDKKKICSIGLRIKDGYSLHGLALNVDMDLYPFSHIHPCGDKNIKMTQIRDLISNINLEKLNTQIINNCKKFLMMNNFEINFLNSIKIF.

One can recognise a BPL/LPL catalytic domain in the interval 30-204 (KNNINEIWLL…NCKKFLMMNN (175 aa)). Residues 68–75 (RGGHMTFH), 135–137 (SIG), and 148–150 (GLA) contribute to the substrate site. Catalysis depends on cysteine 166, which acts as the Acyl-thioester intermediate.

Belongs to the LipB family.

It localises to the cytoplasm. It catalyses the reaction octanoyl-[ACP] + L-lysyl-[protein] = N(6)-octanoyl-L-lysyl-[protein] + holo-[ACP] + H(+). It functions in the pathway protein modification; protein lipoylation via endogenous pathway; protein N(6)-(lipoyl)lysine from octanoyl-[acyl-carrier-protein]: step 1/2. Its function is as follows. Catalyzes the transfer of endogenously produced octanoic acid from octanoyl-acyl-carrier-protein onto the lipoyl domains of lipoate-dependent enzymes. Lipoyl-ACP can also act as a substrate although octanoyl-ACP is likely to be the physiological substrate. This Wigglesworthia glossinidia brevipalpis protein is Octanoyltransferase.